The following is a 553-amino-acid chain: Hyaluronan synthase 3 (553 aa).

Residues 1–15 lie on the Cytoplasmic side of the membrane; sequence MPVQLTTALRVVGTS. The helical transmembrane segment at 16–36 threads the bilayer; it reads LFALAVLGGILAAYVTGYQFI. Residues 37-44 lie on the Extracellular side of the membrane; that stretch reads HTEKHYLS. The chain crosses the membrane as a helical span at residues 45–65; sequence FGLYGAILGLHLLIQSLFAFL. The Cytoplasmic segment spans residues 66 to 377; that stretch reads EHRRMRRAGQ…NSLWFHKHHL (312 aa). The chain crosses the membrane as a helical span at residues 378 to 398; sequence WMTYESVVTGFFPFFLIATVI. Residues 399 to 408 are Extracellular-facing; that stretch reads QLFYRGRIWN. A helical membrane pass occupies residues 409 to 429; it reads ILLFLLTVQLVGIIKATYACF. Residues 430-440 lie on the Cytoplasmic side of the membrane; sequence LRGNAEMIFMS. A helical transmembrane segment spans residues 441–461; it reads LYSLLYMSSLLPAKIFAIATI. N-linked (GlcNAc...) asparagine glycosylation is present at Asn462. Residues 462–473 are Extracellular-facing; sequence NKSGWGTSGRKT. A helical transmembrane segment spans residues 474-494; sequence IVVNFIGLIPVSIWVAVLLGG. The Cytoplasmic segment spans residues 495–515; the sequence is LAYTAYCQDLFSETELAFLVS. A helical membrane pass occupies residues 516–536; the sequence is GAILYGCYWVALLMLYLAIIA. The Extracellular portion of the chain corresponds to 537–553; that stretch reads RRCGKKPEQYSLAFAEV.

It belongs to the NodC/HAS family. As to quaternary structure, homodimers. Forms heterodimers with HAS2 and HAS1. Mg(2+) is required as a cofactor. In terms of processing, O-GlcNAcylation increases the hyaluronan synthase activity, HAS3 stability and its plasma membrane residence. The concentration of UDP-GlcNAc controls the level of O-GlcNAc modification.

It is found in the cell membrane. The protein localises to the golgi apparatus membrane. It localises to the golgi apparatus. The protein resides in the trans-Golgi network membrane. Its subcellular location is the early endosome. The catalysed reaction is [hyaluronan](n) + UDP-N-acetyl-alpha-D-glucosamine = N-acetyl-beta-D-glucosaminyl-(1-&gt;4)-[hyaluronan](n) + UDP + H(+). The enzyme catalyses N-acetyl-beta-D-glucosaminyl-(1-&gt;4)-[hyaluronan](n) + UDP-alpha-D-glucuronate = [hyaluronan](n+1) + UDP + H(+). The protein operates within glycan biosynthesis; hyaluronan biosynthesis. The enzymatic activity depends on the availability of cytosolic levels of UDP-GlcUA and UDP-GlcNAc. In terms of biological role, catalyzes the addition of GlcNAc or GlcUA monosaccharides to the nascent hyaluronan polymer. Therefore, it is essential to hyaluronan synthesis a major component of most extracellular matrices that has a structural role in tissues architectures and regulates cell adhesion, migration and differentiation. This is one of three isoenzymes responsible for cellular hyaluronan synthesis. The polypeptide is Hyaluronan synthase 3 (Homo sapiens (Human)).